The chain runs to 339 residues: Glycerol-3-phosphate dehydrogenase [NAD(P)+] (339 aa).

The NADPH site is built by Ser15, Tyr16, His36, and Lys110. Sn-glycerol 3-phosphate is bound by residues Lys110, Gly139, and Thr141. Position 143 (Ala143) interacts with NADPH. Sn-glycerol 3-phosphate is bound by residues Lys195, Asp248, Ser258, Arg259, and Asn260. Catalysis depends on Lys195, which acts as the Proton acceptor. Arg259 provides a ligand contact to NADPH. NADPH contacts are provided by Val283 and Glu285.

Belongs to the NAD-dependent glycerol-3-phosphate dehydrogenase family.

Its subcellular location is the cytoplasm. The catalysed reaction is sn-glycerol 3-phosphate + NAD(+) = dihydroxyacetone phosphate + NADH + H(+). The enzyme catalyses sn-glycerol 3-phosphate + NADP(+) = dihydroxyacetone phosphate + NADPH + H(+). The protein operates within membrane lipid metabolism; glycerophospholipid metabolism. Functionally, catalyzes the reduction of the glycolytic intermediate dihydroxyacetone phosphate (DHAP) to sn-glycerol 3-phosphate (G3P), the key precursor for phospholipid synthesis. This chain is Glycerol-3-phosphate dehydrogenase [NAD(P)+], found in Klebsiella pneumoniae subsp. pneumoniae (strain ATCC 700721 / MGH 78578).